The sequence spans 150 residues: MAIRSIRKYGDELLRKKSRKVEKIDKRLLTLIDDMFETMYNADGVGLAAPQVGILKRLVVIDVGEGPVVLINPEILETSGKAVDVEGCLSIPERQGEVERPTYVKAKALNEKGEEIVIEAEDLFARAICHETDHLNGVLFVDKLAESEGN.

Residues Cys-88 and His-130 each contribute to the Fe cation site. Glu-131 is a catalytic residue. His-134 is a Fe cation binding site.

Belongs to the polypeptide deformylase family. Fe(2+) is required as a cofactor.

It carries out the reaction N-terminal N-formyl-L-methionyl-[peptide] + H2O = N-terminal L-methionyl-[peptide] + formate. Its function is as follows. Removes the formyl group from the N-terminal Met of newly synthesized proteins. Requires at least a dipeptide for an efficient rate of reaction. N-terminal L-methionine is a prerequisite for activity but the enzyme has broad specificity at other positions. The chain is Peptide deformylase 1 from Clostridium acetobutylicum (strain ATCC 824 / DSM 792 / JCM 1419 / IAM 19013 / LMG 5710 / NBRC 13948 / NRRL B-527 / VKM B-1787 / 2291 / W).